Consider the following 181-residue polypeptide: ATP synthase subunit delta (181 aa).

Belongs to the ATPase delta chain family. In terms of assembly, F-type ATPases have 2 components, F(1) - the catalytic core - and F(0) - the membrane proton channel. F(1) has five subunits: alpha(3), beta(3), gamma(1), delta(1), epsilon(1). F(0) has three main subunits: a(1), b(2) and c(10-14). The alpha and beta chains form an alternating ring which encloses part of the gamma chain. F(1) is attached to F(0) by a central stalk formed by the gamma and epsilon chains, while a peripheral stalk is formed by the delta and b chains.

The protein resides in the cell membrane. Functionally, f(1)F(0) ATP synthase produces ATP from ADP in the presence of a proton or sodium gradient. F-type ATPases consist of two structural domains, F(1) containing the extramembraneous catalytic core and F(0) containing the membrane proton channel, linked together by a central stalk and a peripheral stalk. During catalysis, ATP synthesis in the catalytic domain of F(1) is coupled via a rotary mechanism of the central stalk subunits to proton translocation. In terms of biological role, this protein is part of the stalk that links CF(0) to CF(1). It either transmits conformational changes from CF(0) to CF(1) or is implicated in proton conduction. This Priestia megaterium (strain ATCC 12872 / QMB1551) (Bacillus megaterium) protein is ATP synthase subunit delta.